A 400-amino-acid polypeptide reads, in one-letter code: Telomere repeat-binding protein 6 (400 aa).

The 80-residue stretch at 173-252 folds into the Ubiquitin-like domain; it reads VKFGIKSLNI…DDENLGSLGF (80 aa). Residues 310–369 enclose the HTH myb-type domain; sequence VQRRIRRPFTVSEVEALVQAVERLGTGRWRDVKSHAFNHVNHRTYVDLKDKWKTLVHTAK. Residues 338–365 constitute a DNA-binding region (H-T-H motif); that stretch reads WRDVKSHAFNHVNHRTYVDLKDKWKTLV.

In terms of assembly, homodimer. Expressed ubiquitously.

The protein resides in the nucleus. In terms of biological role, binds specifically to the plant telomeric double-stranded DNA sequences. At least 4 repeats of telomeric sequences are required for binding. This chain is Telomere repeat-binding protein 6 (TRP6), found in Arabidopsis thaliana (Mouse-ear cress).